Here is a 1747-residue protein sequence, read N- to C-terminus: Retroelement silencing factor 1 (1747 aa).

Lysine 216 is covalently cross-linked (Glycyl lysine isopeptide (Lys-Gly) (interchain with G-Cter in SUMO2)). Serine 221 carries the post-translational modification Phosphoserine. The span at 261–272 (TSAVPSQQYATQ) shows a compositional bias: polar residues. The interval 261-280 (TSAVPSQQYATQTDKRPPPP) is disordered. A Glycyl lysine isopeptide (Lys-Gly) (interchain with G-Cter in SUMO2) cross-link involves residue lysine 707. 3 disordered regions span residues 833–856 (PLTQ…NVNQ), 923–956 (PQKP…GFQK), and 1073–1101 (EGSV…KDPA). The segment covering 842 to 856 (ESTNGNSEVTPNVNQ) has biased composition (polar residues). Basic and acidic residues predominate over residues 937-956 (REPEKQLDNTTENKDFGFQK). The span at 1073 to 1087 (EGSVGQQTTYQTSED) shows a compositional bias: polar residues. Over residues 1089–1101 (TADKTSSDSKDPA) the composition is skewed to basic and acidic residues. Lysine 1136 is covalently cross-linked (Glycyl lysine isopeptide (Lys-Gly) (interchain with G-Cter in SUMO2)). The residue at position 1145 (serine 1145) is a Phosphoserine. The segment at 1200-1274 (EEKQKEQCSP…KSLPRTEQEL (75 aa)) is disordered. Positions 1217-1226 (QGERTSDRDV) are enriched in basic and acidic residues. Threonine 1240 is modified (phosphothreonine). A compositionally biased stretch (basic and acidic residues) spans 1242–1261 (PDGKSHFPELQDDSRKDTPK). Residue serine 1358 is modified to Phosphoserine. Residues lysine 1528 and lysine 1636 each participate in a glycyl lysine isopeptide (Lys-Gly) (interchain with G-Cter in SUMO2) cross-link. A disordered region spans residues 1686 to 1716 (KRTQKDSQERDNVNSRLSKRSFSADGFEMLQ). The span at 1689 to 1698 (QKDSQERDNV) shows a compositional bias: basic and acidic residues. Phosphoserine is present on serine 1708. Lysine 1723 participates in a covalent cross-link: Glycyl lysine isopeptide (Lys-Gly) (interchain with G-Cter in SUMO2). A Phosphoserine modification is found at serine 1740.

In terms of assembly, interacts with SETDB1.

The protein resides in the nucleus. Functionally, plays a role in the regulation of imprinted gene expression, regulates repressive epigenetic modifications associated with SETDB1. Required for the recruitment or accumulation of SETDB1 to the endogenous retroviruses (ERVs) and maintenance of repressive chromatin configuration, contributing to a subset of the SETDB1-dependent ERV silencing in embryonic stem cells. The polypeptide is Retroelement silencing factor 1 (Homo sapiens (Human)).